Reading from the N-terminus, the 767-residue chain is Photosystem I P700 chlorophyll a apoprotein A1 (767 aa).

8 consecutive transmembrane segments (helical) span residues 72-95 (IFSAHFGHLAVIFIWLSGAFFHGA), 158-181 (LMALAIGALVMAGLMLNAGVFHYH), 197-221 (LNHHLAGLLGLGSLSWAGHLIHVSA), 305-323 (IAHHHVAIAVLFIVAGHMY), 364-387 (WHAQLGLNLAMLGSLSIIVAQHMY), 403-429 (IGLFTHHMWIGGFLIVGGAAHAAIAMV), 451-473 (AIISHLNWVCIWLGAHSFGLYIH), and 548-566 (FMVHHIHAFTIHVTVLILL). 2 residues coordinate [4Fe-4S] cluster: C590 and C599. 2 helical membrane-spanning segments follow: residues 606 to 627 (HVFLGLFWMYNSLSIVIFHFSW) and 681 to 703 (TSAYGIMFLGAHFIWAFSLMFLF). H692 serves as a coordination point for chlorophyll a'. Chlorophyll a-binding residues include M700 and Y708. Residue W709 participates in phylloquinone binding. A helical membrane pass occupies residues 741–761 (AVGVAHYLLGGIATTWAFFHA).

It belongs to the PsaA/PsaB family. As to quaternary structure, the PsaA/B heterodimer binds the P700 chlorophyll special pair and subsequent electron acceptors. PSI consists of a core antenna complex that captures photons, and an electron transfer chain that converts photonic excitation into a charge separation. The cyanobacterial PSI reaction center is composed of one copy each of PsaA,B,C,D,E,F,I,J,K,L,M and X, and forms trimeric complexes. Requires PSI electron transfer chain: 5 chlorophyll a, 1 chlorophyll a', 2 phylloquinones and 3 4Fe-4S clusters. PSI core antenna: 90 chlorophyll a, 22 carotenoids, 3 phospholipids and 1 galactolipid. P700 is a chlorophyll a/chlorophyll a' dimer, A0 is one or more chlorophyll a, A1 is one or both phylloquinones and FX is a shared 4Fe-4S iron-sulfur center. as cofactor.

Its subcellular location is the cellular thylakoid membrane. It carries out the reaction reduced [plastocyanin] + hnu + oxidized [2Fe-2S]-[ferredoxin] = oxidized [plastocyanin] + reduced [2Fe-2S]-[ferredoxin]. Its function is as follows. PsaA and PsaB bind P700, the primary electron donor of photosystem I (PSI), as well as the electron acceptors A0, A1 and FX. PSI is a plastocyanin/cytochrome c6-ferredoxin oxidoreductase, converting photonic excitation into a charge separation, which transfers an electron from the donor P700 chlorophyll pair to the spectroscopically characterized acceptors A0, A1, FX, FA and FB in turn. Oxidized P700 is reduced on the lumenal side of the thylakoid membrane by plastocyanin or cytochrome c6. This chain is Photosystem I P700 chlorophyll a apoprotein A1, found in Parasynechococcus marenigrum (strain WH8102).